The chain runs to 412 residues: Major facilitator superfamily domain-containing protein 3 (412 aa).

The next 12 helical transmembrane spans lie at 10–30 (GLYL…PILL), 40–60 (VGLT…APLV), 68–88 (VWLT…AVLP), 99–119 (TTVM…DVAL), 152–172 (GGLL…LLAA), 173–193 (TYWL…LPWP), 204–224 (YLLQ…FVLT), 252–272 (LWSG…GGAL), 291–311 (LGSL…GASV), 320–340 (AVLL…TATF), 361–381 (FLAT…GVLA), and 384–404 (LGPH…VLDL).

Belongs to the major facilitator superfamily. In terms of tissue distribution, in brain, expressed in the cortex, striatum, hippocampus, hypothalamus, thalamus and cerebellum (at protein level). Widely expressed with highest levels in kidney and liver.

It is found in the membrane. The protein is Major facilitator superfamily domain-containing protein 3 (Mfsd3) of Mus musculus (Mouse).